Consider the following 101-residue polypeptide: CRISPR-associated endoribonuclease Cas2 (101 aa).

Position 8 (Asp-8) interacts with Mg(2+).

Belongs to the CRISPR-associated endoribonuclease Cas2 protein family. In terms of assembly, homodimer, forms a heterotetramer with a Cas1 homodimer. Mg(2+) serves as cofactor.

CRISPR (clustered regularly interspaced short palindromic repeat), is an adaptive immune system that provides protection against mobile genetic elements (viruses, transposable elements and conjugative plasmids). CRISPR clusters contain sequences complementary to antecedent mobile elements and target invading nucleic acids. CRISPR clusters are transcribed and processed into CRISPR RNA (crRNA). Functions as a ssRNA-specific endoribonuclease. Involved in the integration of spacer DNA into the CRISPR cassette. In Treponema denticola (strain ATCC 35405 / DSM 14222 / CIP 103919 / JCM 8153 / KCTC 15104), this protein is CRISPR-associated endoribonuclease Cas2.